We begin with the raw amino-acid sequence, 509 residues long: MEEFQVYLELDRXRQHDFLYPLIFREYIYALAYDHGLNSSILVQNXGYDNKSSLLIVKRLITRMYQQNHLIISANNSNKNPFWGYNKNLYSQIMSEGLAVSVEIPFSLQLISSLEKAEIIKSYNLRSIHSIFPFFEEKFPYLNYVSDVQIPYPIHLEILIQTLRYWVKDASSFHLLRLFLYEYCNWNSLITPKKRISTFSNSKSNPXFFSKSNPXFFLFLYNFXVCEYXSIFLFLRTKSSYLXLXSFGVLFERIYFYAKIKHFVKVFDKDFPSTLWFFKDPFIHYVXYQGKSILASXNTPFLMKKWKYFLIHLWQXXXXXXXXXXXXXXXXXXXXXXXFLGYFSNVQXNPSVVRSQMLEKSFIMENLMKKLDTIIPIIPLXRSLAKAKXCNVLGHPISKPVWADSSDFDIIDRFLQICRDLSXYYNGSSKKKSLYRIKYILRLSCIKTLARKHKSTVRFFLKRLGSELLEEFFTEEEDLFSLIFSRASSTLQKLDRGRIWYLDIFYFHQ.

This sequence belongs to the intron maturase 2 family. MatK subfamily.

The protein localises to the plastid. Its subcellular location is the chloroplast. Its function is as follows. Usually encoded in the trnK tRNA gene intron. Probably assists in splicing its own and other chloroplast group II introns. The protein is Maturase K of Vachellia farnesiana (Sweet acacia).